A 21-amino-acid polypeptide reads, in one-letter code: Protopolybiakinin-1 (21 aa).

A compositionally biased stretch (basic residues) spans 1–11 (DKNKKPIRVGG). Positions 1-21 (DKNKKPIRVGGRRPPGFTPFR) are disordered.

This sequence belongs to the bradykinin-related peptide family. In terms of tissue distribution, expressed by the venom gland.

It is found in the secreted. Functionally, causes constriction of the isolated rat ileum muscles (is 13-fold less potent than bradykinin (BK)), as well as degranulation of mast cells (is 7-fold more potent than BK). In vivo, causes algesic effects. Muscle constriction and algesic effects are partially mediated by bradykinin receptors B2 (BDKRB2). The sequence is that of Protopolybiakinin-1 from Protopolybia exigua (Neotropical social wasp).